Consider the following 633-residue polypeptide: Dynein axonemal assembly factor 1 (633 aa).

Positions 1 to 80 are disordered; the sequence is MHPEASEPPV…SRDDRDDRGP (80 aa). Residues 22–42 are compositionally biased toward basic and acidic residues; that stretch reads AGDHGDAGPGVRKEEINETKE. Residues 46-60 show a composition bias toward low complexity; that stretch reads GPCTTSCQSQQQPSG. Residues 70-80 show a composition bias toward basic and acidic residues; that stretch reads HSRDDRDDRGP. 6 LRR repeats span residues 101-123, 124-145, 146-167, 168-189, 190-211, and 215-236; these read ALND…EEYT, GLRC…QAQS, ELRC…EPLQ, KLDA…SCLP, VLNT…EHLR, and QLCV…SVLE. The LRRCT domain occupies 249-288; sequence NPVTKHIPNYRRTVTVRLKHLTYLDDRPVFPKDRACAEAW. The segment covering 326-344 has biased composition (basic and acidic residues); sequence EERKKARDRGETPLPESEK. Disordered stretches follow at residues 326–364 and 404–436; these read EERK…TQQK and LSGN…RTED. S349 carries the phosphoserine modification. Basic and acidic residues predominate over residues 352–364; the sequence is AQEKPPKGETQQK. The span at 413–427 shows a compositional bias: low complexity; the sequence is TPVVVTPEEVTSPVE. T462 carries the phosphothreonine modification. S465 and S488 each carry phosphoserine. Polar residues-rich tracts occupy residues 538-555 and 568-592; these read TTDL…SSHP and GESN…SEGG. Residues 538–633 form a disordered region; that stretch reads TTDLETQSQD…GLEDIEFGLD (96 aa).

Belongs to the DNAAF1 family.

The protein resides in the cell projection. The protein localises to the cilium. Its function is as follows. Cilium-specific protein required for the stability of the ciliary architecture. Plays a role in cytoplasmic preassembly of dynein arms. Involved in regulation of microtubule-based cilia and actin-based brush border microvilli. The polypeptide is Dynein axonemal assembly factor 1 (Dnaaf1) (Rattus norvegicus (Rat)).